A 347-amino-acid polypeptide reads, in one-letter code: Haptoglobin (347 aa).

An N-terminal signal peptide occupies residues 1 to 18 (MRALGAVVTLLLWGQLFA). Positions 31 to 88 (DSCPKPPEIANGYVEHLVRYRCRQFYKLQTEGDGIYTLNSEKQWVNPAAGDKLPKCEA) constitute a Sushi domain. Cystine bridges form between Cys52–Cys86, Cys90–Cys207, Cys250–Cys281, and Cys292–Cys322. The Peptidase S1 domain maps to 103 to 345 (IIGGSMDAKG…LKDWVQETMA (243 aa)). Residues Asn148 and Asn152 are each glycosylated (N-linked (GlcNAc...) asparagine). Residues 259–264 (VPEKKG) form an interaction with CD163 region.

It belongs to the peptidase S1 family. In terms of assembly, tetramer of two alpha and two beta chains; disulfide-linked. The hemoglobin/haptoglobin complex is composed of a haptoglobin dimer bound to two hemoglobin alpha-beta dimers. Interacts with CD163. Interacts with ERGIC3. Expressed by the liver and secreted in plasma.

It localises to the secreted. As a result of hemolysis, hemoglobin is found to accumulate in the kidney and is secreted in the urine. Haptoglobin captures, and combines with free plasma hemoglobin to allow hepatic recycling of heme iron and to prevent kidney damage. Haptoglobin also acts as an antioxidant, has antibacterial activity and plays a role in modulating many aspects of the acute phase response. Hemoglobin/haptoglobin complexes are rapidly cleared by the macrophage CD163 scavenger receptor expressed on the surface of liver Kupfer cells through an endocytic lysosomal degradation pathway. The polypeptide is Haptoglobin (Hp) (Rattus norvegicus (Rat)).